The primary structure comprises 353 residues: Uroporphyrinogen decarboxylase (353 aa).

Substrate is bound by residues 27 to 31, Phe46, Asp76, Tyr152, Ser207, and His321; that span reads RQAGR.

Belongs to the uroporphyrinogen decarboxylase family. In terms of assembly, homodimer.

The protein resides in the cytoplasm. The catalysed reaction is uroporphyrinogen III + 4 H(+) = coproporphyrinogen III + 4 CO2. It functions in the pathway porphyrin-containing compound metabolism; protoporphyrin-IX biosynthesis; coproporphyrinogen-III from 5-aminolevulinate: step 4/4. Catalyzes the decarboxylation of four acetate groups of uroporphyrinogen-III to yield coproporphyrinogen-III. This is Uroporphyrinogen decarboxylase from Listeria monocytogenes serotype 4b (strain CLIP80459).